The sequence spans 29 residues: Probable small toxic protein BsrH (29 aa).

A helical membrane pass occupies residues Phe-6–Ile-26.

Its subcellular location is the cell membrane. Functionally, possible toxic component of a type I toxin-antitoxin (TA) system; an overlapping antisense RNA has been identified. This Bacillus subtilis (strain 168) protein is Probable small toxic protein BsrH.